The sequence spans 92 residues: MTRSIKKGPFVDAHLQKKVDEQNEKGTKNVIKTWSRRSMITPDFIGHTFAVHDGRKHVPVFVTEAMVGHKLGEFAPTKTFKGHVKDDKKARR.

This sequence belongs to the universal ribosomal protein uS19 family.

Its function is as follows. Protein S19 forms a complex with S13 that binds strongly to the 16S ribosomal RNA. In Bifidobacterium longum subsp. infantis (strain ATCC 15697 / DSM 20088 / JCM 1222 / NCTC 11817 / S12), this protein is Small ribosomal subunit protein uS19.